Reading from the N-terminus, the 2971-residue chain is MTFLNHYTYLFSIPEKQADKVSGILRLAQARPIETLQNERINKQLNAFLKTYKFEKLITNYKKMQSFIPNNSLNGNKTNSSTNKLYATSLNVFPENPPLMVRKAVSDEADKFSKFTYSKVQVVTNNLNNGMNSKEFIKANNLKPSLRAAESLVLNHLTYNKFKENLYFKTNNIQPTKSKSTSLFFLNILSNSKPRTCSDFLSSPKIRKTWFRNTAWSLQTQQHRSSNGINLSLQLPYALGPSVPAGASGQNMYELPVAQSSSRFGTYYFLQKLLSKYLDVWNASADNGSVLSNSENIKLNFSMVSLLDSKMAIQTPNSLYFVFTQLNQKTFLSYWLLPVAGLALLTPTLLTLTGQSVSVQKFNSFINKKTDMMVLSNTEMPSKSFGTPTLFGTSVEIYLPNSYMPKGEGESGINRVNSSINAVKKNTVTANLVLDSESQEVATSFQNDLISIKYCFNNLYNYISNKTALSTKNLFLFSAIKSNATKHKRTQSFFSVENTTTLGNNSNFVKGHFKSSINAFSSYLPSTNVHSMIPLTSLPYLKAISPLYSKFMIDHSLKFITPKTTLKLLQHKLNKSPKQMYTKTQNFTGLRDLRALNSFSFGQVNFRTNHFLHSNSRPLNHYNQALKLINGYEQYKNNLQINCNKTLDLNTKNKLVYQVHKSHLFNQKCSQIVYKQSLYNRDLCTIRGTGTKVVDYFSHGDKLSNKNGIVLDYFVYSNLLFDNKTNTIINKDGKQNITKLKLNLTKTTVPFKTLIKKYTSINSLVANEQTRNNLNLGLIHFNGHLSVVSNANLLTGRPVKFIYYKFDKRLNSYLIYVNQNLKKFIQLNNNFLKPKPLSHQKNKPVEDFNQYATNNSSPPKTNVFEKSFVEDSSLRKPLTSLRGSKQFLNSLTILFKHQKMFKKKTLKAHKWHSDTQGIFRKHTNSSFGSANFSNGPEESSLSTRLHIQKKRKAKKQRLETRRQKKRTRFFPRPVWLRSRMFLNFLTERNKYYLNSTITKQGFSLPSKDVVTTKLDWLKEDMRPSSLGAYQYKSLLTQKAGNKFQRQSFTEVVSTMEYINGIHKALNNSIFNKIVRKSLLSSSQNPLKLRLVANYSKMQFMHRVKLPFYRTLKHSEGTKNLANKKQNLRDIKIKANYNNFKSQKANNQPQQNDKDKDKDTMFRDFWVWSYNNTQTNAFNQNLWWLLPNLTTKQSNLEFLTSTYPTAKETQRAKEEIHGNSIPTASKNQIALIRLNWALNKTNINTFTDYSKRNNLWTTQKLRNQSKNNKTKSLEKQFITNWEKFFLNKNLNIFSKKIISKVKQKKQKLNYMTSYLNVQSEHNVKIFHNSWWTHLNIKNLVNNQDMVIPVREGYFSVGNFNSEFINSAIIKSINNKTLVENYVYSPSSEKETMQLLLMSSSILLHLCAIISLVSISQVRCFVKFHLILLYKLSNVYNAILNQLSNKLQKNLPIYNNINKLNSRYFYMNHQKSQIKQRKKLLTYFSLTLLKKQFVTVKPLQIRNFASIKNQSSNNSNLTYTDMLPLSLRANKFRGSKYDISIREEEGQSAHIKPSKSMYAKLNILSLKTIFLKQLLMNKKPSALPSNVGLKSNRETQKSQLIQRIKTKELQISLKKNIIGFSKVTKNHILKILFNVIEVFQTAVRNISSFFEKPAEFTTTWIAYGFLVEWSSDFITIIPENVDIYIWNVFSKIYRTIPLSFISTTLGPASTVFDPVTNSTIPIQMGNFNYQKMVAFPILLSLSHLLHRRILYLFDTLFSTITQPDTDLIARQEKGTLFWDIWADFLVTAADYYNVNVAALSTIKAEQNSLIENISNDFDNLTMSSKKPFFMPNKGVSNIKNIFWIKKLKEPQLPESIVQNREVFVRERKRTLKGLFNIYAPQEETLWNNPTSPKNLSDEKISFKLFNQLNLQLFAEKNKIKPYFEAYFSTTQQKTNIMQSAFPEANLNRWSVNQFITYQSWHSHNGSNNSNGDLFIDYHPPKTFSHIPALKYNSILQQPIGSLVCQIYSGLFNKQISKNILLVNPKTTSNNLVDYNVLLIQALAGETEMKIITDNAQRYALVNRGFAIGIKLLREVFDAIALNTPCIFLLEDIHAIGERRPMLISDFGGGMSDDNGSFKEDFFGSQRDEVHEKNQVVYQLTRHAITHYKKPFKGDYSLAIPTNLYVTDLFLKLPTQSISNLTNVENHNLSIKNKIQHNGTQSLTETKRNLGGDINKNSYLQLTQFTKTLAPPSTSPFSVLLLKEEKRLKPNKIVEELPWTSLPGEQLATKPRTSYSVRAKVAMLAELSLSNLSAKLDMITDLLVIIDSVRSNKGFVVFATTDIPHVLDPALRRPGRLDETICLPNIHTSNILNFTKNYEIFKSAKDTSNFGKKIILNEMQNLTTTSTQRDMYLSCLPTNNQTHKTKREGVLTMNLKDYNILLNQVYFAEGTGGILNSQMHKDSLQKSLNFALISHSKKLKELNVSKLIGSNGTVSQGNVDQLGVFAGQIVNKQKKSLQQHLPNSKKSFKKKYKDKAIIYYEVGKFVLNYFLNNQLTQSSIIDKPVSVTNKQTNDITIFGNDFLNLKTINYLSLYNSKNKILLQLMLIFGGKISQLLSSKNLVKSLKQASINSYMVEEESGSISSAGMPLGQTHLLPKALSVLAKPMIFSDGYNNQNLKTATTLLLSFIHKRYLYRKNLIVPKLLSFADGNILDEPPSPPFSSLLIPAKRFENYKRFFRDTLTGDKMGQRKSQITLLEKLQYHMQLRSIKQLNATFSSQENLDFQSNAALTSQKLDTLMSLSTNNLLQNPTNINWYYQNRILKRHGQYLTNQWWNGQLSEHNAETVFLSDIDWRSSFIKNKNINITKSKNLYRLTQQKNNTDGLDVLLDFPDTDQYYNPKRRRWLLNNGSWNFWFNFDKLYSEEIVTTWILESLIQTYKYLHKNTELLDFVTNKFITLGYIAPENANLQNISGFPSQSELLSTKEIILTNSFKRF.

Residues 929 to 964 (SANFSNGPEESSLSTRLHIQKKRKAKKQRLETRRQK) form a disordered region. Positions 936–945 (PEESSLSTRL) are enriched in polar residues. A compositionally biased stretch (basic residues) spans 946-955 (HIQKKRKAKK).

It localises to the plastid. The protein resides in the chloroplast. This is an uncharacterized protein from Chlamydomonas reinhardtii (Chlamydomonas smithii).